We begin with the raw amino-acid sequence, 35 residues long: Putative gene 58 protein (35 aa).

This Bacillus phage SP01 (Bacteriophage SP01) protein is Putative gene 58 protein (58).